A 179-amino-acid chain; its full sequence is Large ribosomal subunit protein uL5 (179 aa).

The protein belongs to the universal ribosomal protein uL5 family. As to quaternary structure, part of the 50S ribosomal subunit; part of the 5S rRNA/L5/L18/L25 subcomplex. Contacts the 5S rRNA and the P site tRNA. Forms a bridge to the 30S subunit in the 70S ribosome.

In terms of biological role, this is one of the proteins that bind and probably mediate the attachment of the 5S RNA into the large ribosomal subunit, where it forms part of the central protuberance. In the 70S ribosome it contacts protein S13 of the 30S subunit (bridge B1b), connecting the 2 subunits; this bridge is implicated in subunit movement. Contacts the P site tRNA; the 5S rRNA and some of its associated proteins might help stabilize positioning of ribosome-bound tRNAs. The polypeptide is Large ribosomal subunit protein uL5 (Aeromonas salmonicida (strain A449)).